Consider the following 91-residue polypeptide: Small ribosomal subunit protein bS16 (91 aa).

This sequence belongs to the bacterial ribosomal protein bS16 family.

The protein is Small ribosomal subunit protein bS16 of Exiguobacterium sibiricum (strain DSM 17290 / CCUG 55495 / CIP 109462 / JCM 13490 / 255-15).